A 445-amino-acid chain; its full sequence is tRNA(Ile2) 2-agmatinylcytidine synthetase TiaS (445 aa).

A DNA-binding region (OB) is located at residues 278-349; it reads VVVRGSVAEK…KDGLVLNAEY (72 aa).

The protein belongs to the TiaS family.

The protein localises to the cytoplasm. It catalyses the reaction cytidine(34) in tRNA(Ile2) + agmatine + ATP + H2O = 2-agmatinylcytidine(34) in tRNA(Ile2) + AMP + 2 phosphate + 2 H(+). ATP-dependent agmatine transferase that catalyzes the formation of 2-agmatinylcytidine (agm2C) at the wobble position (C34) of tRNA(Ile2), converting the codon specificity from AUG to AUA. The sequence is that of tRNA(Ile2) 2-agmatinylcytidine synthetase TiaS from Thermofilum pendens (strain DSM 2475 / Hrk 5).